The following is a 432-amino-acid chain: Glutamate-1-semialdehyde 2,1-aminomutase (432 aa).

Lys266 is modified (N6-(pyridoxal phosphate)lysine).

Belongs to the class-III pyridoxal-phosphate-dependent aminotransferase family. HemL subfamily. Homodimer. The cofactor is pyridoxal 5'-phosphate.

The protein resides in the cytoplasm. It catalyses the reaction (S)-4-amino-5-oxopentanoate = 5-aminolevulinate. It functions in the pathway porphyrin-containing compound metabolism; protoporphyrin-IX biosynthesis; 5-aminolevulinate from L-glutamyl-tRNA(Glu): step 2/2. The sequence is that of Glutamate-1-semialdehyde 2,1-aminomutase from Janthinobacterium sp. (strain Marseille) (Minibacterium massiliensis).